Here is a 72-residue protein sequence, read N- to C-terminus: Protein kish-A (72 aa).

Residues 1–26 (MSAIFNFQSLLIVILLLICTCAYLRA) form the signal peptide. Over 27–53 (LVPNLLDKNKTGILGIFWKCARIGERK) the chain is Extracellular. N-linked (GlcNAc...) asparagine glycosylation occurs at Asn35. A helical transmembrane segment spans residues 54 to 71 (SPYVAVCCVVMAFSILFM). Position 72 (Gln72) is a topological domain, cytoplasmic.

It belongs to the KISH family.

The protein localises to the golgi apparatus membrane. Its function is as follows. Involved in the early part of the secretory pathway. The chain is Protein kish-A (tmem167a) from Xenopus tropicalis (Western clawed frog).